A 453-amino-acid polypeptide reads, in one-letter code: 5-hydroxytryptamine receptor 1 (453 aa).

Topologically, residues Met-1–Thr-36 are extracellular. A helical membrane pass occupies residues Val-37–Val-57. Topologically, residues Cys-58–Phe-74 are cytoplasmic. A helical transmembrane segment spans residues Phe-75–Ala-94. At Leu-95–Cys-110 the chain is on the extracellular side. A disulfide bridge connects residues Cys-110 and Cys-225. The helical transmembrane segment at Phe-111–Tyr-133 threads the bilayer. Residues Asp-134–Arg-153 lie on the Cytoplasmic side of the membrane. Residues Ala-154–Leu-175 form a helical membrane-spanning segment. At Glu-176–His-223 the chain is on the extracellular side. Residues Val-224–Val-244 traverse the membrane as a helical segment. Residues Pro-245–Thr-301 are Cytoplasmic-facing. Residues Ile-302–Ala-322 traverse the membrane as a helical segment. The Extracellular segment spans residues Ala-323–Glu-331. A helical membrane pass occupies residues Cys-332–Gly-352. Residues Thr-353–Ser-453 are Cytoplasmic-facing. The segment at Asp-397–Lys-428 is disordered. The span at His-403–Arg-412 shows a compositional bias: basic and acidic residues.

The protein belongs to the G-protein coupled receptor 1 family. Reproductive system.

It is found in the cell membrane. Its function is as follows. This is one of the several different receptors for 5-hydroxytryptamine (serotonin). 5-HT plays important roles in various behavioral and physiological processes in aplysia. These include feeding, locomotion, circadian rhythm, learning and memory, synaptic plasticity, and synaptic growth. This receptor is mediated by G proteins that stimulate phospholipase C. This Aplysia californica (California sea hare) protein is 5-hydroxytryptamine receptor 1 (5HTB1).